Consider the following 560-residue polypeptide: Nucleoprotein (560 aa).

Residues 53-236 form a binding site for the cap structure m7GTP region; that stretch reads MRKDKRTDTD…ITQEQSQINV (184 aa). The interval 333-353 is disordered; it reads LTDTGSPNHPPVRNGGSPRLS. Mn(2+) is bound by residues Asp-379 and Glu-381. Glu-389, Cys-496, His-499, and Cys-520 together coordinate Zn(2+). A Mn(2+)-binding site is contributed by Asp-524.

Belongs to the arenaviridae nucleocapsid protein family. Homomultimerizes to form the nucleocapsid. Binds to viral genomic RNA. Interacts with glycoprotein G2. Interacts with protein Z; this interaction probably directs the encapsidated genome to budding sites. Interacts with protein L; this interaction does not interfere with Z-L interaction. Interacts with host IKBKE (via Protein kinase domain); the interaction inhibits IKBKE kinase activity.

It is found in the virion. It localises to the host cytoplasm. Its function is as follows. Encapsidates the genome, protecting it from nucleases. The encapsidated genomic RNA is termed the nucleocapsid (NC). Serves as template for viral transcription and replication. The increased presence of protein N in host cell does not seem to trigger the switch from transcription to replication as observed in other negative strain RNA viruses. Through the interaction with host IKBKE, strongly inhibits the phosphorylation and nuclear translocation of host IRF3, a protein involved in interferon activation pathway, leading to the inhibition of interferon-beta and IRF3-dependent promoters activation. Also encodes a functional 3'-5' exoribonuclease that degrades preferentially dsRNA substrates and thereby participates in the suppression of interferon induction. The chain is Nucleoprotein from Pirital mammarenavirus (isolate Rat/Venezuela/VAV-488/1995) (PIRV).